Reading from the N-terminus, the 161-residue chain is Allophycocyanin beta chain (161 aa).

N4-methylasparagine is present on Asn-71. Cys-81 provides a ligand contact to (2R,3E)-phycocyanobilin.

The protein belongs to the phycobiliprotein family. As to quaternary structure, heterodimer of an alpha and a beta chain. Contains one covalently linked phycocyanobilin chromophore.

Its subcellular location is the plastid. It localises to the chloroplast thylakoid membrane. Functionally, light-harvesting photosynthetic bile pigment-protein from the phycobiliprotein complex. Allophycocyanin has a maximum absorption at approximately 650 nanometers. The protein is Allophycocyanin beta chain (apcB) of Cyanidium caldarium (Red alga).